Consider the following 374-residue polypeptide: DNA integrity scanning protein DisA (374 aa).

A DAC domain is found at 20 to 158 (DGLMRASLSA…DGQRRVLEDS (139 aa)). ATP is bound by residues Gly-87, Leu-105, and 118–122 (TRHRT).

This sequence belongs to the DisA family. In terms of assembly, homooctamer. Interacts with RadA. Mg(2+) serves as cofactor.

It catalyses the reaction 2 ATP = 3',3'-c-di-AMP + 2 diphosphate. Diadenylate cyclase activity is inhibited by the interaction with RadA. In terms of biological role, participates in a DNA-damage check-point that is active prior to asymmetric division when DNA is damaged. DisA forms globular foci that rapidly scan along the chromosomes during sporulation, searching for lesions. When a lesion is present, DisA pauses at the lesion site. This triggers a cellular response that culminates in a temporary block in sporulation initiation. Also has diadenylate cyclase activity, catalyzing the condensation of 2 ATP molecules into cyclic di-AMP (c-di-AMP). c-di-AMP acts as a signaling molecule that couples DNA integrity with progression of sporulation. The rise in c-di-AMP level generated by DisA while scanning the chromosome, operates as a positive signal that advances sporulation; upon encountering a lesion, the DisA focus arrests at the damaged site and halts c-di-AMP synthesis. The sequence is that of DNA integrity scanning protein DisA from Streptomyces coelicolor (strain ATCC BAA-471 / A3(2) / M145).